The primary structure comprises 511 residues: Serine/threonine-protein kinase Nek3 (511 aa).

N-acetylmethionine is present on Met1. An interaction with VAV2 region spans residues 1–282 (MDNYTVLRVI…EQILDEIKIS (282 aa)). Positions 4 to 255 (YTVLRVIGQG…ATTLLCRGSL (252 aa)) constitute a Protein kinase domain. Residues 10–18 (IGQGSFGRA) and Lys33 contribute to the ATP site. Asp125 functions as the Proton acceptor in the catalytic mechanism. Position 159 is a phosphothreonine; by autocatalysis (Thr159). Disordered regions lie at residues 299 to 370 (LGEA…GPSS) and 443 to 511 (GPLS…GERA). Residues 309–321 (EEERGRKCSHTEL) are compositionally biased toward basic and acidic residues. The segment covering 472-485 (LDEEDTDFEEDNEN) has biased composition (acidic residues). Residue Thr477 is modified to Phosphothreonine. A compositionally biased stretch (gly residues) spans 498–511 (YGDGPGGQLLGERA).

Belongs to the protein kinase superfamily. NEK Ser/Thr protein kinase family. NIMA subfamily. Interacts with PXN, PRLR, VAV1 and VAV2 and this interaction is prolactin-dependent. Requires Mg(2+) as cofactor. In terms of processing, phosphorylation at Thr-477 regulates its catalytic activity. In terms of tissue distribution, brain.

Its subcellular location is the cytoplasm. It localises to the cell projection. The protein localises to the axon. It catalyses the reaction L-seryl-[protein] + ATP = O-phospho-L-seryl-[protein] + ADP + H(+). It carries out the reaction L-threonyl-[protein] + ATP = O-phospho-L-threonyl-[protein] + ADP + H(+). Protein kinase which influences neuronal morphogenesis and polarity through effects on microtubules. Regulates microtubule acetylation in neurons. Contributes to prolactin-mediated phosphorylation of PXN and VAV2. This chain is Serine/threonine-protein kinase Nek3 (Nek3), found in Mus musculus (Mouse).